We begin with the raw amino-acid sequence, 154 residues long: 6,7-dimethyl-8-ribityllumazine synthase (154 aa).

5-amino-6-(D-ribitylamino)uracil is bound by residues tryptophan 22, 56–58 (AWE), and 80–82 (CVI). 85–86 (DT) serves as a coordination point for (2S)-2-hydroxy-3-oxobutyl phosphate. Histidine 88 acts as the Proton donor in catalysis. Position 113 (asparagine 113) interacts with 5-amino-6-(D-ribitylamino)uracil. Residue arginine 127 participates in (2S)-2-hydroxy-3-oxobutyl phosphate binding.

It belongs to the DMRL synthase family. As to quaternary structure, forms an icosahedral capsid composed of 60 subunits, arranged as a dodecamer of pentamers.

The enzyme catalyses (2S)-2-hydroxy-3-oxobutyl phosphate + 5-amino-6-(D-ribitylamino)uracil = 6,7-dimethyl-8-(1-D-ribityl)lumazine + phosphate + 2 H2O + H(+). It functions in the pathway cofactor biosynthesis; riboflavin biosynthesis; riboflavin from 2-hydroxy-3-oxobutyl phosphate and 5-amino-6-(D-ribitylamino)uracil: step 1/2. Functionally, catalyzes the formation of 6,7-dimethyl-8-ribityllumazine by condensation of 5-amino-6-(D-ribitylamino)uracil with 3,4-dihydroxy-2-butanone 4-phosphate. This is the penultimate step in the biosynthesis of riboflavin. This chain is 6,7-dimethyl-8-ribityllumazine synthase, found in Xanthomonas campestris pv. campestris (strain 8004).